The sequence spans 336 residues: Holliday junction branch migration complex subunit RuvB (336 aa).

The segment at 4-184 (ADRLISAASN…FGIVQRLEFY (181 aa)) is large ATPase domain (RuvB-L). ATP contacts are provided by residues Ile23, Arg24, Gly65, Lys68, Thr69, Thr70, 131–133 (EDY), Arg174, Tyr184, and Arg221. Residue Thr69 participates in Mg(2+) binding. The interval 185 to 255 (QVPDLQYIVG…VAAQALDMLN (71 aa)) is small ATPAse domain (RuvB-S). Positions 258–336 (AEGFDYMDRK…HFGITPPEMP (79 aa)) are head domain (RuvB-H). Arg294, Arg313, and Arg318 together coordinate DNA.

This sequence belongs to the RuvB family. In terms of assembly, homohexamer. Forms an RuvA(8)-RuvB(12)-Holliday junction (HJ) complex. HJ DNA is sandwiched between 2 RuvA tetramers; dsDNA enters through RuvA and exits via RuvB. An RuvB hexamer assembles on each DNA strand where it exits the tetramer. Each RuvB hexamer is contacted by two RuvA subunits (via domain III) on 2 adjacent RuvB subunits; this complex drives branch migration. In the full resolvosome a probable DNA-RuvA(4)-RuvB(12)-RuvC(2) complex forms which resolves the HJ.

It localises to the cytoplasm. The catalysed reaction is ATP + H2O = ADP + phosphate + H(+). In terms of biological role, the RuvA-RuvB-RuvC complex processes Holliday junction (HJ) DNA during genetic recombination and DNA repair, while the RuvA-RuvB complex plays an important role in the rescue of blocked DNA replication forks via replication fork reversal (RFR). RuvA specifically binds to HJ cruciform DNA, conferring on it an open structure. The RuvB hexamer acts as an ATP-dependent pump, pulling dsDNA into and through the RuvAB complex. RuvB forms 2 homohexamers on either side of HJ DNA bound by 1 or 2 RuvA tetramers; 4 subunits per hexamer contact DNA at a time. Coordinated motions by a converter formed by DNA-disengaged RuvB subunits stimulates ATP hydrolysis and nucleotide exchange. Immobilization of the converter enables RuvB to convert the ATP-contained energy into a lever motion, pulling 2 nucleotides of DNA out of the RuvA tetramer per ATP hydrolyzed, thus driving DNA branch migration. The RuvB motors rotate together with the DNA substrate, which together with the progressing nucleotide cycle form the mechanistic basis for DNA recombination by continuous HJ branch migration. Branch migration allows RuvC to scan DNA until it finds its consensus sequence, where it cleaves and resolves cruciform DNA. The polypeptide is Holliday junction branch migration complex subunit RuvB (Enterobacter sp. (strain 638)).